The primary structure comprises 392 residues: tRNA (guanine(26)-N(2)/guanine(27)-N(2))-dimethyltransferase (392 aa).

In terms of domain architecture, Trm1 methyltransferase spans 2-375 (EIVQEGIAKI…LSFEEVMKKM (374 aa)). Residues arginine 36, arginine 66, aspartate 84, glutamate 113, and alanine 114 each coordinate S-adenosyl-L-methionine. Residues cysteine 247, cysteine 250, cysteine 266, and cysteine 269 each contribute to the Zn(2+) site.

It belongs to the class I-like SAM-binding methyltransferase superfamily. Trm1 family.

It catalyses the reaction guanosine(26)/guanosine(27) in tRNA + 4 S-adenosyl-L-methionine = N(2)-dimethylguanosine(26)/N(2)-dimethylguanosine(27) in tRNA + 4 S-adenosyl-L-homocysteine + 4 H(+). Functionally, dimethylates the guanine residues at position 26 and 27 of one or more tRNAs using S-adenosyl-L-methionine as donor of the methyl groups. This is tRNA (guanine(26)-N(2)/guanine(27)-N(2))-dimethyltransferase from Aquifex aeolicus (strain VF5).